Reading from the N-terminus, the 602-residue chain is Fumarate reductase flavoprotein subunit (602 aa).

FAD-binding positions include 12-16, 36-38, 44-52, 156-158, 192-193, and Asp212; these read GAGGA, ISK, SHTVAAEGG, HFV, and AT. A Tele-8alpha-FAD histidine modification is found at His45. Catalysis depends on residues His233 and Arg249. Residues 356–357, Glu380, and 391–397 contribute to the FAD site; these read HY and RLGSNSL. The segment at 581–602 is disordered; sequence YGGEADAADKAEAANKKEKANG. Residues 587–602 are compositionally biased toward basic and acidic residues; sequence AADKAEAANKKEKANG.

It belongs to the FAD-dependent oxidoreductase 2 family. FRD/SDH subfamily. In terms of assembly, part of an enzyme complex containing four subunits: a flavoprotein (FrdA), an iron-sulfur protein (FrdB), and two hydrophobic anchor proteins (FrdC and FrdD). Can be cross-linked to SdhE. Purified from membrane fractions associated with protoporphyrinogen IX dehydrogenase (hemG). It depends on FAD as a cofactor.

The protein resides in the cell inner membrane. It carries out the reaction a quinone + succinate = fumarate + a quinol. The catalysed reaction is a menaquinone + succinate = a menaquinol + fumarate. Inhibited by oxaloacetate, a substrate analog. Two distinct, membrane-bound, FAD-containing enzymes are responsible for the catalysis of fumarate and succinate interconversion; fumarate reductase is used during anaerobic growth, and succinate dehydrogenase is used during aerobic growth. The QFR enzyme complex binds 2 quinones in or near the membrane; 1 near the [3Fe-4S] cluster (QP is proximal to the [3Fe-4S] cluster, on the cytoplasmic side of the membrane) while QD (the distal cluster) is on the other side of the membrane. It is not clear if both of the quinol-binding sites are functionally relevant. The chain is Fumarate reductase flavoprotein subunit (frdA) from Escherichia coli (strain K12).